The sequence spans 837 residues: Leucine-zipper-like transcriptional regulator 1 (837 aa).

Position 2 is an N-acetylalanine (Ala-2). Kelch repeat units follow at residues 76-125, 127-182, 184-235, 236-282, 292-338, and 396-447; these read AIYV…VYGS, MFVF…VYSD, LWIF…VCRD, KMFV…QRRY, HLYV…PERA, and AMYI…FVLG. Residues 324 to 352 are disordered; that stretch reads SSDSEVGGAEMPERASSSEDASTLTSEER. 2 consecutive BTB domains span residues 440 to 534 and 664 to 733; these read CDVE…KYPR and CDIT…NMPP.

The protein belongs to the LZTR1 family. Homodimer. Component of the BCR(LZTR1) E3 ubiquitin ligase complex, at least composed of CUL3, LZTR1 and RBX1. Interacts with Ras (K-Ras/KRAS, N-Ras/NRAS and H-Ras/HRAS). Interacts with RAF1. Interacts with SHOC2. Interacts with PPP1CB. Post-translationally, phosphorylated on tyrosine upon induction of apoptosis, leading to its degradation by the proteasome. As to expression, widely expressed.

Its subcellular location is the endomembrane system. It localises to the recycling endosome. The protein localises to the golgi apparatus. Its pathway is protein modification; protein ubiquitination. In terms of biological role, substrate-specific adapter of a BCR (BTB-CUL3-RBX1) E3 ubiquitin-protein ligase complex that mediates ubiquitination of Ras (K-Ras/KRAS, N-Ras/NRAS and H-Ras/HRAS). Is a negative regulator of RAS-MAPK signaling that acts by controlling Ras levels and decreasing Ras association with membranes. The protein is Leucine-zipper-like transcriptional regulator 1 of Mus musculus (Mouse).